The primary structure comprises 332 residues: L-lactate dehydrogenase A chain (332 aa).

Residues 29 to 57 (GMVG…MEDK) and Arg-99 contribute to the NAD(+) site. Arg-106, Asn-138, and Arg-169 together coordinate substrate. Position 138 (Asn-138) interacts with NAD(+). His-193 (proton acceptor) is an active-site residue. Thr-248 is a substrate binding site.

The protein belongs to the LDH/MDH superfamily. LDH family. As to quaternary structure, homotetramer.

It is found in the cytoplasm. It catalyses the reaction (S)-lactate + NAD(+) = pyruvate + NADH + H(+). Its pathway is fermentation; pyruvate fermentation to lactate; (S)-lactate from pyruvate: step 1/1. Its function is as follows. Interconverts simultaneously and stereospecifically pyruvate and lactate with concomitant interconversion of NADH and NAD(+). The chain is L-lactate dehydrogenase A chain (ldha) from Sphyraena idiastes (Pelican barracuda).